Consider the following 127-residue polypeptide: Small ribosomal subunit protein uS12m (127 aa).

This sequence belongs to the universal ribosomal protein uS12 family.

Its subcellular location is the mitochondrion. This Acanthamoeba castellanii (Amoeba) protein is Small ribosomal subunit protein uS12m (RPS12).